Reading from the N-terminus, the 124-residue chain is Fluoride-specific ion channel FluC (124 aa).

The next 3 helical transmembrane spans lie at valine 36–leucine 56, tyrosine 63–leucine 83, and alanine 99–valine 119. Positions 73 and 76 each coordinate Na(+).

Belongs to the fluoride channel Fluc/FEX (TC 1.A.43) family.

The protein resides in the cell inner membrane. The catalysed reaction is fluoride(in) = fluoride(out). Na(+) is not transported, but it plays an essential structural role and its presence is essential for fluoride channel function. In terms of biological role, fluoride-specific ion channel. Important for reducing fluoride concentration in the cell, thus reducing its toxicity. The chain is Fluoride-specific ion channel FluC from Cereibacter sphaeroides (strain ATCC 17029 / ATH 2.4.9) (Rhodobacter sphaeroides).